The chain runs to 649 residues: Nitrosuccinic acid synthase npaA (649 aa).

Belongs to the nitrosuccinic acid synthase family. Requires FAD as cofactor.

It carries out the reaction L-aspartate + 3 NADPH + 3 O2 + 2 H(+) = 2-nitrobutanedioate + 3 NADP(+) + 4 H2O. The protein operates within mycotoxin biosynthesis. Functionally, nitrosuccinic acid synthase; part of the gene cluster that mediates the biosynthesis of the deadly neurotoxic nitroalkane 3-nitropropanoic acid (3-NPA) that acts as an antimetabolite of succinate and irreversibly inhibits succinate dehydrogenase and disrupts mitochondrial oxidative phosphorylation. NpaA catalyzes the iterative oxidation of L-aspartic acid to nitrosuccinic acid (2-nitrobutanedioate). Alternative amino acid substrates such as L-glutamate and D-aspartate are not accepted by npaA as a substrate, showing the strict substrate specificity toward L-aspartate. The nitrosuccinic acid decarboxylase npaB then facilitates decarboxylation of Nitrosuccinic acid to produce 3-NPA. This is Nitrosuccinic acid synthase npaA from Aspergillus oryzae (strain ATCC 42149 / RIB 40) (Yellow koji mold).